The following is a 161-amino-acid chain: TRAF-interacting protein with FHA domain-containing protein B (161 aa).

Positions 36-91 (LLLGRGQDAHLQLQLPRLSRRHLSLEPYLEKGSALLAFCLKALSRKGCVWVNGLTL) constitute an FHA domain.

In terms of assembly, interacts with TIFA.

Its function is as follows. Inhibits TIFA-mediated TRAF6 activation possibly by inducing a conformational change in TIFA. This chain is TRAF-interacting protein with FHA domain-containing protein B, found in Homo sapiens (Human).